Reading from the N-terminus, the 103-residue chain is Large ribosomal subunit protein bL21 (103 aa).

Belongs to the bacterial ribosomal protein bL21 family. In terms of assembly, part of the 50S ribosomal subunit. Contacts protein L20.

This protein binds to 23S rRNA in the presence of protein L20. This Desulforapulum autotrophicum (strain ATCC 43914 / DSM 3382 / VKM B-1955 / HRM2) (Desulfobacterium autotrophicum) protein is Large ribosomal subunit protein bL21.